We begin with the raw amino-acid sequence, 282 residues long: Stage 0 sporulation protein J (282 aa).

Residues 139-158 constitute a DNA-binding region (H-T-H motif); sequence EQLAKRLGKSRPHIANHLRL.

It belongs to the ParB family.

It is found in the cytoplasm. It localises to the nucleoid. In terms of biological role, required for the initiation of sporulation and for normal chromosome segregation. Antagonizes sporulation inhibition by Soj. It probably interacts with a specific DNA site and other proteins involved in partitioning and cell division, and antagonizes Soj in response to cell cycle events related to chromosome partitioning. The chain is Stage 0 sporulation protein J from Bacillus subtilis (strain 168).